A 22-amino-acid chain; its full sequence is Piscidin-3 (22 aa).

Residue glycine 22 is modified to Glycine amide.

Belongs to the pleurocidin family. In terms of tissue distribution, mast cells in gill, skin and gut, and in lining blood vessels in the viscera.

It is found in the secreted. Its subcellular location is the membrane. In terms of biological role, antimicrobial peptide with broad-spectrum activity against Gram-positive and Gram-negative bacteria. Rapidly inactivates both channel catfish herpesvirus (ED(50)=11 uM) and frog virus 3 (ED(50)=16 uM) over a wide temperature range. Has hemolytic activity. The chain is Piscidin-3 from Morone chrysops x Morone saxatilis (White bass x Striped bass).